Here is a 271-residue protein sequence, read N- to C-terminus: Elongation factor Ts (271 aa).

The interval 76–79 (TDFV) is involved in Mg(2+) ion dislocation from EF-Tu.

Belongs to the EF-Ts family.

It is found in the cytoplasm. Its function is as follows. Associates with the EF-Tu.GDP complex and induces the exchange of GDP to GTP. It remains bound to the aminoacyl-tRNA.EF-Tu.GTP complex up to the GTP hydrolysis stage on the ribosome. The sequence is that of Elongation factor Ts from Saccharopolyspora erythraea (strain ATCC 11635 / DSM 40517 / JCM 4748 / NBRC 13426 / NCIMB 8594 / NRRL 2338).